The primary structure comprises 462 residues: Cytochrome c biogenesis protein CcsB (462 aa).

Transmembrane regions (helical) follow at residues 30 to 50 (LRVAIALLLLISVFSILGTVI), 89 to 109 (TWWYLVLLLAFGVSLIACTFR), and 175 to 195 (IGPIIVHIGMIVTLVGSIWGA).

This sequence belongs to the Ccs1/CcsB family. May interact with CcsA.

The protein localises to the cellular thylakoid membrane. In terms of biological role, required during biogenesis of c-type cytochromes (cytochrome c6 and cytochrome f) at the step of heme attachment. This Picosynechococcus sp. (strain ATCC 27264 / PCC 7002 / PR-6) (Agmenellum quadruplicatum) protein is Cytochrome c biogenesis protein CcsB.